The chain runs to 248 residues: MFHVKHVGSYEELASFTSVKGNLGFDTVFEAVFMIFGPRLNIAQRYVDLLANTGIERGLLGPHEANRLWDRHLLNSAVVAELLDPGDRVVDIGSGAGLPGLPLAIARPDLQVVLLEPLLRRVTFLREVVAELGLDVEVVRGRAEELWVRDRIGERDVAVSRAVAALDKLTKWSIPLLRPGGQILAIKGEHVFDEIHQHRRVMASLGAVDVMVVVCGANYLCRPVTVVLTRCGQQMRHKPARVGDRKTQ.

S-adenosyl-L-methionine is bound by residues Gly-93, Leu-98, 143-144, and Arg-161; that span reads AE.

It belongs to the methyltransferase superfamily. RNA methyltransferase RsmG family.

Its subcellular location is the cytoplasm. Functionally, specifically methylates the N7 position of guanine in position 518 of 16S rRNA. The polypeptide is Ribosomal RNA small subunit methyltransferase G (Mycobacterium leprae (strain Br4923)).